We begin with the raw amino-acid sequence, 94 residues long: MLQSNEYFSGKVKSIGFTSSSTGRASVGVMAEGEYTFSTAQPEEMTVVSGALHVLLPGETEWKTYEAGQVFHVPGHSEFHLQVAEPTSYLCRYL.

This sequence belongs to the nucleoside phosphorylase PpnP family.

The catalysed reaction is a purine D-ribonucleoside + phosphate = a purine nucleobase + alpha-D-ribose 1-phosphate. It carries out the reaction adenosine + phosphate = alpha-D-ribose 1-phosphate + adenine. It catalyses the reaction cytidine + phosphate = cytosine + alpha-D-ribose 1-phosphate. The enzyme catalyses guanosine + phosphate = alpha-D-ribose 1-phosphate + guanine. The catalysed reaction is inosine + phosphate = alpha-D-ribose 1-phosphate + hypoxanthine. It carries out the reaction thymidine + phosphate = 2-deoxy-alpha-D-ribose 1-phosphate + thymine. It catalyses the reaction uridine + phosphate = alpha-D-ribose 1-phosphate + uracil. The enzyme catalyses xanthosine + phosphate = alpha-D-ribose 1-phosphate + xanthine. In terms of biological role, catalyzes the phosphorolysis of diverse nucleosides, yielding D-ribose 1-phosphate and the respective free bases. Can use uridine, adenosine, guanosine, cytidine, thymidine, inosine and xanthosine as substrates. Also catalyzes the reverse reactions. This chain is Pyrimidine/purine nucleoside phosphorylase, found in Cronobacter sakazakii (strain ATCC BAA-894) (Enterobacter sakazakii).